The chain runs to 186 residues: ADP-ribosylation factor-like protein DDB_G0292332 (186 aa).

GTP contacts are provided by residues 24–31, 78–82, and 138–141; these read GVENVGKT, DIGGK, and NKQD.

It belongs to the small GTPase superfamily. Arf family.

Functionally, binds and exchanges GTP and GDP. The sequence is that of ADP-ribosylation factor-like protein DDB_G0292332 from Dictyostelium discoideum (Social amoeba).